The sequence spans 765 residues: Ubiquitin-like modifier-activating enzyme atg7 (765 aa).

The GXGXXG motif motif lies at 436-441 (GAGTLG). The Glycyl thioester intermediate role is filled by C616. 2 disordered regions span residues 646–670 (AAPA…PPNH) and 744–765 (AAND…PELL). The homodimerization stretch occupies residues 721–760 (ALTEKDYITELSGLAEVQRKAEAAANDVEWDSDEEGMEDE). Residues 748-765 (VEWDSDEEGMEDEEPELL) are compositionally biased toward acidic residues.

Belongs to the ATG7 family. Homodimer. Interacts with ATG8 through a thioester bond between Cys-616 and the C-terminal Gly of ATG8 and with ATG12 through a thioester bond between Cys-616 and the C-terminal Gly of ATG12. Also interacts with ATG3.

The protein resides in the cytoplasm. Its subcellular location is the preautophagosomal structure. In terms of biological role, E1-like activating enzyme involved in the 2 ubiquitin-like systems required for cytoplasm to vacuole transport (Cvt) and autophagy. Activates ATG12 for its conjugation with ATG5 and ATG8 for its conjugation with phosphatidylethanolamine. Both systems are needed for the ATG8 association to Cvt vesicles and autophagosomes membranes. Autophagy is essential for maintenance of amino acid levels and protein synthesis under nitrogen starvation. Required for selective autophagic degradation of the nucleus (nucleophagy) as well as for mitophagy which contributes to regulate mitochondrial quantity and quality by eliminating the mitochondria to a basal level to fulfill cellular energy requirements and preventing excess ROS production. Required for normal mycelial growth and conidiogenesis, and regulates sclerotial formation. Plays an essential role in pathogenesis. The sequence is that of Ubiquitin-like modifier-activating enzyme atg7 from Botryotinia fuckeliana (strain BcDW1) (Noble rot fungus).